The following is a 469-amino-acid chain: DNA-binding transcriptional regulator NtrC (469 aa).

The region spanning 5–119 (IVWVVDDDSS…EAVALVERAI (115 aa)) is the Response regulatory domain. At Asp-54 the chain carries 4-aspartylphosphate. In terms of domain architecture, Sigma-54 factor interaction spans 140–369 (IIGEAPAMQD…LENTCRWLTV (230 aa)). ATP-binding positions include 168-175 (GESGTGKE) and 231-240 (ADGGTLFLDE). The segment at residues 445 to 464 (KQEAARLLGWGRNTLTRKLK) is a DNA-binding region (H-T-H motif).

Post-translationally, phosphorylated and dephosphorylated by NtrB.

It localises to the cytoplasm. Functionally, member of the two-component regulatory system NtrB/NtrC, which controls expression of the nitrogen-regulated (ntr) genes in response to nitrogen limitation. Phosphorylated NtrC binds directly to DNA and stimulates the formation of open promoter-sigma54-RNA polymerase complexes. In Escherichia coli O157:H7, this protein is DNA-binding transcriptional regulator NtrC (glnG).